The sequence spans 146 residues: MKLRVVWIGKTKESAIQTLTGEYLKRLSRYVATEGLEIGSEEALLKLKDRPGRTAPVLVLMDERGKQVGSEELANFLGYHRDQGVQDLIFAIGPSDGWQKETLKSATQVLSMGKMTLPHELARVVLLEQLYRGYTILTGHPYHGGH.

Residues Leu-60, Gly-93, and Met-112–Leu-117 contribute to the S-adenosyl-L-methionine site.

This sequence belongs to the RNA methyltransferase RlmH family. In terms of assembly, homodimer.

The protein localises to the cytoplasm. The catalysed reaction is pseudouridine(1915) in 23S rRNA + S-adenosyl-L-methionine = N(3)-methylpseudouridine(1915) in 23S rRNA + S-adenosyl-L-homocysteine + H(+). Functionally, specifically methylates the pseudouridine at position 1915 (m3Psi1915) in 23S rRNA. In Koribacter versatilis (strain Ellin345), this protein is Ribosomal RNA large subunit methyltransferase H.